The chain runs to 417 residues: UDP-N-acetylglucosamine 1-carboxyvinyltransferase (417 aa).

22–23 (KN) lines the phosphoenolpyruvate pocket. R92 provides a ligand contact to UDP-N-acetyl-alpha-D-glucosamine. Catalysis depends on C116, which acts as the Proton donor. 2-(S-cysteinyl)pyruvic acid O-phosphothioketal is present on C116. Positions 304 and 326 each coordinate UDP-N-acetyl-alpha-D-glucosamine.

It belongs to the EPSP synthase family. MurA subfamily.

The protein localises to the cytoplasm. The catalysed reaction is phosphoenolpyruvate + UDP-N-acetyl-alpha-D-glucosamine = UDP-N-acetyl-3-O-(1-carboxyvinyl)-alpha-D-glucosamine + phosphate. Its pathway is cell wall biogenesis; peptidoglycan biosynthesis. Functionally, cell wall formation. Adds enolpyruvyl to UDP-N-acetylglucosamine. The chain is UDP-N-acetylglucosamine 1-carboxyvinyltransferase from Desulfosudis oleivorans (strain DSM 6200 / JCM 39069 / Hxd3) (Desulfococcus oleovorans).